The following is a 127-amino-acid chain: Small ribosomal subunit protein uS11 (127 aa).

Belongs to the universal ribosomal protein uS11 family. In terms of assembly, part of the 30S ribosomal subunit.

In terms of biological role, located on the platform of the 30S subunit. The polypeptide is Small ribosomal subunit protein uS11 (Halobacterium salinarum (strain ATCC 700922 / JCM 11081 / NRC-1) (Halobacterium halobium)).